The sequence spans 113 residues: Carboxysome shell protein CcmK1 (113 aa).

In terms of domain architecture, BMC spans 4-90 (AVGMIETLGF…PHENLEYVLP (87 aa)).

Belongs to the bacterial microcompartments protein family. CcmK subfamily. In terms of assembly, homohexamer. Interacts preferentially with CcmK2 and CcmK4a rather than itself in vitro.

The protein localises to the carboxysome. One of the shell proteins of the carboxysome, a polyhedral inclusion where RuBisCO (ribulose bisphosphate carboxylase, rbcL-rbcS) is sequestered. Assembles into hexamers which make sheets that form the facets of the polyhedral carboxysome. The hexamer central pore probably regulates metabolite flux. This chain is Carboxysome shell protein CcmK1, found in Thermosynechococcus vestitus (strain NIES-2133 / IAM M-273 / BP-1).